A 255-amino-acid chain; its full sequence is Hydroxyacylglutathione hydrolase (255 aa).

Histidine 52, histidine 54, aspartate 56, histidine 57, histidine 109, aspartate 126, and histidine 166 together coordinate Zn(2+).

This sequence belongs to the metallo-beta-lactamase superfamily. Glyoxalase II family. Monomer. Zn(2+) is required as a cofactor.

It catalyses the reaction an S-(2-hydroxyacyl)glutathione + H2O = a 2-hydroxy carboxylate + glutathione + H(+). Its pathway is secondary metabolite metabolism; methylglyoxal degradation; (R)-lactate from methylglyoxal: step 2/2. In terms of biological role, thiolesterase that catalyzes the hydrolysis of S-D-lactoyl-glutathione to form glutathione and D-lactic acid. The protein is Hydroxyacylglutathione hydrolase of Anaeromyxobacter dehalogenans (strain 2CP-C).